A 396-amino-acid polypeptide reads, in one-letter code: Cytochrome P450 121 (396 aa).

Heme is bound at residue Cys-345.

The protein belongs to the cytochrome P450 family. Requires heme as cofactor.

Its subcellular location is the cytoplasm. The protein is Cytochrome P450 121 (cyp121) of Mycobacterium bovis (strain ATCC BAA-935 / AF2122/97).